Reading from the N-terminus, the 275-residue chain is Transcription factor JUNGBRUNNEN 1 (275 aa).

The disordered stretch occupies residues 1–24 (MSGEGNLGKDHEEENEAPLPGFRF). Positions 18-167 (PLPGFRFHPT…VWTLCRIFKR (150 aa)) constitute an NAC domain. A DNA-binding region spans residues 115-173 (VGLKKSLVYYLGSAGKGTKTDWMMHEFRLPSTTKTDSPAQQAEVWTLCRIFKRVTSQRN). Residues 191–219 (CSKTSSLDSDHTSHRTVDSMSHEPPLPQP) are disordered. The span at 198–211 (DSDHTSHRTVDSMS) shows a compositional bias: basic and acidic residues.

Expressed in roots, root caps, cotyledons, tips and margin of young leaves, senescent regions of fully expanded leaves and floral tissues, including old sepals, petals, staments, mature anthers and pollen grains. Not detected in the abscission zone of open flowers, emerging lateral roots and root meristematic zones.

The protein resides in the nucleus. In terms of biological role, transcription factor that binds to the 5'- RRYGCCGT-3' consensus core sequence. Central longevity regulator. Negative regulator of leaf senescence. Modulates cellular H(2)O(2) levels and enhances tolerance to various abiotic stresses through the regulation of DREB2A. The polypeptide is Transcription factor JUNGBRUNNEN 1 (JUB1) (Arabidopsis thaliana (Mouse-ear cress)).